Consider the following 273-residue polypeptide: Vacuolar iron transporter (273 aa).

At 1–47 (MGKQKIIDARKAYYEGDIEKSKEIHSHYHNLDKHAEHHSLDKDHLKT) the chain is on the cytoplasmic side. A helical transmembrane segment spans residues 48-68 (IIFGSLDGIITIFAIVSGCVG). Residues 69-72 (ANIT) lie on the Vacuolar side of the membrane. A helical membrane pass occupies residues 73–93 (PAQVIIIGVGNLFANAISMGF). At 94–181 (SEYTSSTAQI…NEDKSEAFKK (88 aa)) the chain is on the cytoplasmic side. Residues E113, E116, E124, E127, M161, and E165 each coordinate Fe cation. A helical membrane pass occupies residues 182–202 (GILMFLSFCFFGMIPLFSYVL). Residues 203-212 (YNLFFSAENY) are Vacuolar-facing. Residues 213–233 (TSSFAVVFISTLITLFILGLF) traverse the membrane as a helical segment. Residues 234–246 (KSQFTTQKPIVCA) are Cytoplasmic-facing. The helical transmembrane segment at 247–267 (LSMVLNGSIAGMLPFLFGVLL) threads the bilayer. Topologically, residues 268-273 (KTNSGD) are vacuolar.

It belongs to the CCC1 family. As to quaternary structure, monomer.

The protein localises to the vacuole membrane. It is found in the endoplasmic reticulum membrane. The catalysed reaction is Fe(2+)(in) = Fe(2+)(out). Its function is as follows. Vacuolar iron transporter involved in the transfer of iron ions from the cytosol to the vacuole for intracellular iron storage. Involved in detoxification of excess iron. The transport mechanism is not well defined and the role of protons is not clear. The sequence is that of Vacuolar iron transporter from Plasmodium berghei (strain Anka).